A 203-amino-acid polypeptide reads, in one-letter code: MEPVLVYNKRETFTKSNLNKLRKEGYIPAVAYGDDIKSLPGYVSKKEFEKLYKQKGLAGKIKILIDGKERTALIKEVQTHYVKGNIIHVDFQILSENKPIYVEVPIVFENAEILKSRGLVLQRQIDTVEIEGLPKDIPEHLVIDLMEYEKPTAIKLRDIKLPEGIKITEDLDEVVAVIDVSEITEEPETEEKKEEGASSVSNS.

The segment at Glu-182–Ser-203 is disordered.

This sequence belongs to the bacterial ribosomal protein bL25 family. CTC subfamily. As to quaternary structure, part of the 50S ribosomal subunit; part of the 5S rRNA/L5/L18/L25 subcomplex. Contacts the 5S rRNA. Binds to the 5S rRNA independently of L5 and L18.

In terms of biological role, this is one of the proteins that binds to the 5S RNA in the ribosome where it forms part of the central protuberance. The sequence is that of Large ribosomal subunit protein bL25 from Caldicellulosiruptor saccharolyticus (strain ATCC 43494 / DSM 8903 / Tp8T 6331).